Here is a 319-residue protein sequence, read N- to C-terminus: COP9 signalosome complex subunit 6 (319 aa).

One can recognise an MPN domain in the interval 33 to 166 (VALHPLVILN…VSVYESVIDI (134 aa)).

The protein belongs to the peptidase M67A family. CSN6 subfamily. Component of the CSN complex, probably composed of cops1, cops2, cops3, cops4, cops5, cops6, cops7, cops8 and cops9.

Its subcellular location is the cytoplasm. It is found in the nucleus. In terms of biological role, component of the COP9 signalosome complex (CSN), a complex involved in various cellular and developmental processes. The CSN complex is an essential regulator of the ubiquitin (Ubl) conjugation pathway by mediating the deneddylation of the cullin subunits of E3 ligase complexes, leading to modify the Ubl ligase activity. This is COP9 signalosome complex subunit 6 (cops6) from Xenopus tropicalis (Western clawed frog).